The following is a 367-amino-acid chain: Alginate lyase (367 aa).

Positions 1 to 24 (MTLLKRISSPALLALALFGGAAHA) are cleaved as a signal peptide. Substrate contacts are provided by residues 63 to 64 (SK), 136 to 137 (HT), and tyrosine 254.

It belongs to the polysaccharide lyase 5 family.

It is found in the periplasm. It carries out the reaction Eliminative cleavage of alginate to give oligosaccharides with 4-deoxy-alpha-L-erythro-hex-4-enuronosyl groups at their non-reducing ends and beta-D-mannuronate at their reducing end.. Catalyzes the depolymerization of alginate by cleaving the beta-1,4 glycosidic bond between two adjacent sugar residues via a beta-elimination mechanism. May serve to degrade mislocalized alginate that is trapped in the periplasmic space. The chain is Alginate lyase from Pseudomonas putida (strain GB-1).